We begin with the raw amino-acid sequence, 117 residues long: Larval cuticle protein A2B (117 aa).

Residues 12–15 (AAPV) form repeat 1. Residues 29–95 (HPQYQYGYDV…AVVHREPLVA (67 aa)) enclose the Chitin-binding type R&amp;R domain. The stretch at 108-111 (AAPV) is repeat 2.

Its function is as follows. Component of the cuticle of the larva of Tenebrio molitor. The polypeptide is Larval cuticle protein A2B (Tenebrio molitor (Yellow mealworm beetle)).